The chain runs to 303 residues: D-alanine--D-alanine ligase (303 aa).

Residues 100–295 form the ATP-grasp domain; the sequence is KQLLRRHGIL…FPALIARLIE (196 aa). Position 127–180 (127–180) interacts with ATP; that stretch reads GLGYPLFVKPNTGGSSLCLSRVTQPEGLAPALEAVFAHCGEAIVEPAIPGVEVT. Asp249, Glu262, and Asn264 together coordinate Mg(2+).

The protein belongs to the D-alanine--D-alanine ligase family. Requires Mg(2+) as cofactor. It depends on Mn(2+) as a cofactor.

The protein localises to the cytoplasm. It catalyses the reaction 2 D-alanine + ATP = D-alanyl-D-alanine + ADP + phosphate + H(+). The protein operates within cell wall biogenesis; peptidoglycan biosynthesis. Functionally, cell wall formation. The polypeptide is D-alanine--D-alanine ligase (Nitratidesulfovibrio vulgaris (strain DP4) (Desulfovibrio vulgaris)).